Reading from the N-terminus, the 89-residue chain is Pigment-dispersing hormone peptides (89 aa).

Positions methionine 1–glycine 22 are cleaved as a signal peptide. Alanine 86 is subject to Alanine amide.

This sequence belongs to the arthropod PDH family.

The protein localises to the secreted. In terms of biological role, capable of inducing pigment dispersion in the chromatophores of the fiddler crab Uca pugilator. The sequence is that of Pigment-dispersing hormone peptides from Romalea microptera (Eastern lubber grasshopper).